We begin with the raw amino-acid sequence, 364 residues long: Spermidine/putrescine import ATP-binding protein PotA (364 aa).

The ABC transporter domain occupies 5–235 (LSFKGVTKGF…PVNRFVADFI (231 aa)). 37 to 44 (GPSGCGKT) is a binding site for ATP.

The protein belongs to the ABC transporter superfamily. Spermidine/putrescine importer (TC 3.A.1.11.1) family. In terms of assembly, the complex is composed of two ATP-binding proteins (PotA), two transmembrane proteins (PotB and PotC) and a solute-binding protein (PotD).

The protein resides in the cell membrane. The enzyme catalyses ATP + H2O + polyamine-[polyamine-binding protein]Side 1 = ADP + phosphate + polyamineSide 2 + [polyamine-binding protein]Side 1.. Functionally, part of the ABC transporter complex PotABCD involved in spermidine/putrescine import. Responsible for energy coupling to the transport system. This Staphylococcus haemolyticus (strain JCSC1435) protein is Spermidine/putrescine import ATP-binding protein PotA.